Reading from the N-terminus, the 416-residue chain is MPYNFCLPSLSCRTSCSSRPCVPPSCHSCTLPGACNIPANVSNCNWFCEGSFNGSEKETMQFLNDRLASYLEKVRQLERDNAELENLIRERSQQQEPLLCPSYQSYFKTIEELQQKILCTKSENARLVVQIDNAKLAADDFRTKYQTELSLRQLVESDINGLRRILDELTLCKSDLEAQVESLKEELLCLKSNHEQEVNTLRCQLGDRLNVEVDAAPTVDLNRVLNETRSQYEALVETNRREVEQWFTTQTEELNKQVVSSSEQLQSYQAEIIELRRTVNALEIELQAQHNLRDSLENTLTESEARYSSQLSQVQSLITNVESQLAEIRSDLERQNQEYQVLLDVRARLECEINTYRSLLESEDCNLPSNPCATTNACSKPIGPCLSNPCTSCVPPAPCTPCAPRPRCGPCNSFVR.

Residues 1-56 are head; it reads MPYNFCLPSLSCRTSCSSRPCVPPSCHSCTLPGACNIPANVSNCNWFCEGSFNGSE. The IF rod domain maps to 56–367; that stretch reads EKETMQFLND…SLLESEDCNL (312 aa). The coil 1A stretch occupies residues 57-91; the sequence is KETMQFLNDRLASYLEKVRQLERDNAELENLIRER. The tract at residues 92 to 102 is linker 1; sequence SQQQEPLLCPS. Positions 103–203 are coil 1B; the sequence is YQSYFKTIEE…HEQEVNTLRC (101 aa). Residues 204 to 219 are linker 12; it reads QLGDRLNVEVDAAPTV. The tract at residues 220–363 is coil 2; sequence DLNRVLNETR…NTYRSLLESE (144 aa). The tract at residues 364–416 is tail; sequence DCNLPSNPCATTNACSKPIGPCLSNPCTSCVPPAPCTPCAPRPRCGPCNSFVR.

This sequence belongs to the intermediate filament family. As to expression, present in scalp but not in hairless skin. Abundantly expressed in the differentiating cortex of growing (anagen) hair. Expression is restricted to the keratinocytes of the hair cortex and is absent from inner root sheath and medulla.

This is Keratin, type I cuticular Ha1 (KRT31) from Homo sapiens (Human).